A 103-amino-acid chain; its full sequence is Sec-independent protein translocase protein TatA (103 aa).

Residues methionine 1–phenylalanine 21 form a helical membrane-spanning segment. Residues tyrosine 60–lysine 103 form a disordered region.

It belongs to the TatA/E family. As to quaternary structure, the Tat system comprises two distinct complexes: a TatABC complex, containing multiple copies of TatA, TatB and TatC subunits, and a separate TatA complex, containing only TatA subunits. Substrates initially bind to the TatABC complex, which probably triggers association of the separate TatA complex to form the active translocon.

It localises to the cell inner membrane. Functionally, part of the twin-arginine translocation (Tat) system that transports large folded proteins containing a characteristic twin-arginine motif in their signal peptide across membranes. TatA could form the protein-conducting channel of the Tat system. This chain is Sec-independent protein translocase protein TatA, found in Bartonella quintana (strain Toulouse) (Rochalimaea quintana).